Here is a 138-residue protein sequence, read N- to C-terminus: ATP synthase epsilon chain (138 aa).

Belongs to the ATPase epsilon chain family. F-type ATPases have 2 components, CF(1) - the catalytic core - and CF(0) - the membrane proton channel. CF(1) has five subunits: alpha(3), beta(3), gamma(1), delta(1), epsilon(1). CF(0) has three main subunits: a, b and c.

Its subcellular location is the cell inner membrane. Produces ATP from ADP in the presence of a proton gradient across the membrane. In Geobacter sulfurreducens (strain ATCC 51573 / DSM 12127 / PCA), this protein is ATP synthase epsilon chain.